Here is a 233-residue protein sequence, read N- to C-terminus: Glycerol-3-phosphate acyltransferase 5 (233 aa).

The next 5 helical transmembrane spans lie at 3–23 (LVFI…MAYL), 69–89 (MILL…VGLF), 116–136 (LVMA…FGLF), 143–163 (VFLG…FFGI), and 168–188 (TISW…LMAP).

The protein belongs to the PlsY family. As to quaternary structure, probably interacts with PlsX.

The protein resides in the cell membrane. It catalyses the reaction an acyl phosphate + sn-glycerol 3-phosphate = a 1-acyl-sn-glycero-3-phosphate + phosphate. It functions in the pathway lipid metabolism; phospholipid metabolism. Its function is as follows. Catalyzes the transfer of an acyl group from acyl-phosphate (acyl-PO(4)) to glycerol-3-phosphate (G3P) to form lysophosphatidic acid (LPA). This enzyme utilizes acyl-phosphate as fatty acyl donor, but not acyl-CoA or acyl-ACP. The polypeptide is Glycerol-3-phosphate acyltransferase 5 (Dehalococcoides mccartyi (strain ATCC BAA-2266 / KCTC 15142 / 195) (Dehalococcoides ethenogenes (strain 195))).